The following is a 138-amino-acid chain: Large ribosomal subunit protein mL43 (138 aa).

This sequence belongs to the mitochondrion-specific ribosomal protein mL43 family. Component of the mitochondrial large ribosomal subunit (mt-LSU). Mature N.crassa 74S mitochondrial ribosomes consist of a small (37S) and a large (54S) subunit. The 37S small subunit contains a 16S ribosomal RNA (16S mt-rRNA) and 32 different proteins. The 54S large subunit contains a 23S rRNA (23S mt-rRNA) and 42 different proteins.

It localises to the mitochondrion. Its function is as follows. Component of the mitochondrial ribosome (mitoribosome), a dedicated translation machinery responsible for the synthesis of mitochondrial genome-encoded proteins, including at least some of the essential transmembrane subunits of the mitochondrial respiratory chain. The mitoribosomes are attached to the mitochondrial inner membrane and translation products are cotranslationally integrated into the membrane. The protein is Large ribosomal subunit protein mL43 (mrpl51) of Neurospora crassa (strain ATCC 24698 / 74-OR23-1A / CBS 708.71 / DSM 1257 / FGSC 987).